Consider the following 117-residue polypeptide: Large ribosomal subunit protein uL18 (117 aa).

The protein belongs to the universal ribosomal protein uL18 family. As to quaternary structure, part of the 50S ribosomal subunit; part of the 5S rRNA/L5/L18/L25 subcomplex. Contacts the 5S and 23S rRNAs.

In terms of biological role, this is one of the proteins that bind and probably mediate the attachment of the 5S RNA into the large ribosomal subunit, where it forms part of the central protuberance. The protein is Large ribosomal subunit protein uL18 of Chromobacterium violaceum (strain ATCC 12472 / DSM 30191 / JCM 1249 / CCUG 213 / NBRC 12614 / NCIMB 9131 / NCTC 9757 / MK).